Here is a 439-residue protein sequence, read N- to C-terminus: tRNA modification GTPase MnmE (439 aa).

(6S)-5-formyl-5,6,7,8-tetrahydrofolate is bound by residues arginine 20, glutamate 78, and lysine 116. Positions glycine 211–glutamate 364 constitute a TrmE-type G domain. Residues asparagine 221–threonine 226, serine 240–threonine 246, and aspartate 265–glycine 268 contribute to the GTP site. Serine 225 and threonine 246 together coordinate Mg(2+). Lysine 439 lines the (6S)-5-formyl-5,6,7,8-tetrahydrofolate pocket.

It belongs to the TRAFAC class TrmE-Era-EngA-EngB-Septin-like GTPase superfamily. TrmE GTPase family. As to quaternary structure, homodimer. Heterotetramer of two MnmE and two MnmG subunits. It depends on K(+) as a cofactor.

The protein localises to the cytoplasm. Exhibits a very high intrinsic GTPase hydrolysis rate. Involved in the addition of a carboxymethylaminomethyl (cmnm) group at the wobble position (U34) of certain tRNAs, forming tRNA-cmnm(5)s(2)U34. The protein is tRNA modification GTPase MnmE of Ehrlichia ruminantium (strain Welgevonden).